The primary structure comprises 57 residues: MAETRVRKNESIDAALRRFKRSLSKEGTLAEVRKRKHYEKPSVRRKKKSEAARKRKF.

The segment at 31-57 is disordered; the sequence is EVRKRKHYEKPSVRRKKKSEAARKRKF. Residues 33 to 57 show a composition bias toward basic residues; the sequence is RKRKHYEKPSVRRKKKSEAARKRKF.

It belongs to the bacterial ribosomal protein bS21 family.

The chain is Small ribosomal subunit protein bS21 (rpsU) from Halalkalibacterium halodurans (strain ATCC BAA-125 / DSM 18197 / FERM 7344 / JCM 9153 / C-125) (Bacillus halodurans).